Here is a 100-residue protein sequence, read N- to C-terminus: Large ribosomal subunit protein bL28 (100 aa).

Residues 1 to 21 form a disordered region; the sequence is MSRVCDITGQGKSFGNKVSHS. Residues 10 to 19 show a composition bias toward polar residues; that stretch reads QGKSFGNKVS.

This sequence belongs to the bacterial ribosomal protein bL28 family.

This Ehrlichia canis (strain Jake) protein is Large ribosomal subunit protein bL28.